The following is a 1214-amino-acid chain: Formin-D (1214 aa).

Residues 10 to 379 (KKEESPQSID…KMNNGESYLD (370 aa)) form the GBD/FH3 domain. Residues 401–448 (SGEKAVLIQKEIEDLKKQKKRDQDKLAEKDKLLTKLAKRMRKMEEAIK) adopt a coiled-coil conformation. Residues 457–544 (NNQIEIESPP…GSGDGIPLPP (88 aa)) enclose the FH1 domain. Composition is skewed to polar residues over residues 462-479 (IESPPDSSTSTPQETTPG) and 518-534 (LDTTNQQGSTDASQTEA). 6 disordered regions span residues 462–490 (IESPPDSSTSTPQETTPGGTKVPLKTSPV), 507–569 (APNG…SRPP), 868–948 (PKSV…PLKD), 1026–1045 (DKSTQRKNEKERKEMEIKKS), 1054–1089 (LKKIGSPSSSNRILASNESSPTSSTSSVVHQHDDED), and 1133–1214 (MNLQ…EGEN). The span at 541 to 554 (PLPPGAPPPPPPPG) shows a compositional bias: pro residues. The 476-residue stretch at 562 to 1037 (PQLCSRPPSI…STQRKNEKER (476 aa)) folds into the FH2 domain. A compositionally biased stretch (basic and acidic residues) spans 868 to 877 (PKSVEPKPDD). Positions 930 to 940 (QVNTNSTSDSK) are enriched in polar residues. The stretch at 1019 to 1056 (EIEKSIKDKSTQRKNEKERKEMEIKKSKLEMIHSKLKK) forms a coiled coil. Polar residues predominate over residues 1059–1071 (SPSSSNRILASNE). The DAD domain maps to 1065–1095 (RILASNESSPTSSTSSVVHQHDDEDEETIKE). Over residues 1161–1171 (SSTYSSISSIY) the composition is skewed to low complexity. The span at 1174–1214 (EPLDMSDQEDEDEEEEEDEEEEEEEEEGDDDNDNDEEEGEN) shows a compositional bias: acidic residues. The stretch at 1176-1207 (LDMSDQEDEDEEEEEDEEEEEEEEEGDDDNDN) forms a coiled coil.

It belongs to the formin homology family. Diaphanous subfamily. Interacts (via GBD/FH3 domain) with activated Rho-GTPases.

In terms of biological role, formins play an important role in the nucleation of actin and the formation of linear actin filaments. The polypeptide is Formin-D (forD) (Dictyostelium discoideum (Social amoeba)).